A 392-amino-acid chain; its full sequence is Succinyl-diaminopimelate desuccinylase (392 aa).

Position 76 (H76) interacts with Zn(2+). D78 is an active-site residue. D107 contributes to the Zn(2+) binding site. The active-site Proton acceptor is E143. Residues E144, E172, and H357 each contribute to the Zn(2+) site.

Belongs to the peptidase M20A family. DapE subfamily. Homodimer. Zn(2+) is required as a cofactor. It depends on Co(2+) as a cofactor.

The catalysed reaction is N-succinyl-(2S,6S)-2,6-diaminopimelate + H2O = (2S,6S)-2,6-diaminopimelate + succinate. The protein operates within amino-acid biosynthesis; L-lysine biosynthesis via DAP pathway; LL-2,6-diaminopimelate from (S)-tetrahydrodipicolinate (succinylase route): step 3/3. Catalyzes the hydrolysis of N-succinyl-L,L-diaminopimelic acid (SDAP), forming succinate and LL-2,6-diaminopimelate (DAP), an intermediate involved in the bacterial biosynthesis of lysine and meso-diaminopimelic acid, an essential component of bacterial cell walls. This is Succinyl-diaminopimelate desuccinylase from Helicobacter hepaticus (strain ATCC 51449 / 3B1).